The sequence spans 28 residues: Small integral membrane protein 47 (28 aa).

Residues 7–24 form a helical membrane-spanning segment; that stretch reads VTLAMALFTILTSIYFFN.

Its subcellular location is the membrane. This chain is Small integral membrane protein 47, found in Homo sapiens (Human).